A 543-amino-acid chain; its full sequence is MWRRTYLLLLVIRVYFALSPSYLHPDENFQGPEVFAGRVLSYPSKLPWEFTADKPIRSVFPLWPIYDVPISLLKWFYAETGAPTPPPPQVIYYVLRGVMFLLGFVLEDWAVYELVPFARHRRATVVLVASSYVTWTYQTHTFSNSLETLLVAWGLVLIRRIVVNKRRSSVFSCAVLAFIAVAGVFNRITFPAFLAIPGLQLLPHFRRKSVSPPVSLFSFVGFGIFFFGIAVLVDTAFYRPSATLWDALHSPIITPINNLLYNSDSSNLALHGLHPHYQHFLVNLPQLLGPAYAMMAISLWGLPVIPTWLKNARAVSALSATVILSIFPHQEPRFLIPCVPLLLSCFRVSKSRLFLAVWMIFNAALGFLMGIYHQGGVVPAQLAMPSIISASSVESNDALPGEIPVVSATVFWWKTYSPPLWLLGTNDNSSLNIETRDLMGVPGPNLIEELEKLLPPCNVAGSKQAGSVFVVAPKSAAFLDRYTFLPSSSSVSSALELHELWSYRKHINLDDLDFGTEGVYPTLRRVIGRRGLAVWRAKRAGCN.

The next 5 helical transmembrane spans lie at Thr-5–Pro-25, Val-98–Ala-118, Leu-176–Ile-196, Pro-213–Val-233, and Leu-353–His-373. Asn-428 is a glycosylation site (N-linked (GlcNAc...) asparagine).

Belongs to the glycosyltransferase 22 family. PIGZ subfamily.

Its subcellular location is the endoplasmic reticulum membrane. Its pathway is glycolipid biosynthesis; glycosylphosphatidylinositol-anchor biosynthesis. Functionally, alpha-1,2-mannosyltransferase involved in glycosylphosphatidylinositol-anchor biosynthesis. Transfers a fourth mannose to trimannosyl-GPIs during GPI precursor assembly. The presence of a fourth mannose in GPI is essential in fungi. This Aspergillus oryzae (strain ATCC 42149 / RIB 40) (Yellow koji mold) protein is GPI mannosyltransferase 4 (smp3).